We begin with the raw amino-acid sequence, 1989 residues long: Exophilin-5 (1989 aa).

Residues 7-63 (AFDFSFLNDEEARKILQVLERNEELQRAEKDRISKLQKTKRDIRWLQGVTGEWFEEI) form the RabBD domain. 2 disordered regions span residues 93-117 (NDPI…PFSS) and 348-391 (TQSK…FLRA). Polar residues-rich tracts occupy residues 100 to 111 (TSRSKNVTNQKK) and 359 to 376 (HQQS…WNRS). Positions 377–389 (DSSRDRENQEEFL) are enriched in basic and acidic residues. Phosphoserine is present on Ser-603. Disordered stretches follow at residues 631–651 (FSQI…NPTV), 806–827 (STAS…RTDQ), and 882–933 (AALP…NQKN). Polar residues predominate over residues 641–651 (PQSPNLQNPTV). A phosphoserine mark is found at Ser-806 and Ser-809. A compositionally biased stretch (polar residues) spans 891–909 (KNSSLDAPVVPSTTVFSRR). Basic and acidic residues predominate over residues 910 to 927 (SPSDKDPSLGEREEKDNA). Ser-1028 and Ser-1086 each carry phosphoserine. Disordered regions lie at residues 1094-1113 (EATE…VRKG), 1124-1152 (SCPS…ASEL), and 1365-1493 (EIFS…TNCQ). The segment covering 1098-1110 (RMTNVKSSGSTSV) has biased composition (polar residues). Ser-1124 bears the Phosphoserine mark. The segment covering 1379–1390 (SENKKERGKKLQ) has biased composition (basic and acidic residues). The span at 1416-1431 (SINSSNSGPSSLPALS) shows a compositional bias: low complexity. Over residues 1434 to 1447 (NIGNSQTRRSSWEC) the composition is skewed to polar residues. The residue at position 1505 (Ser-1505) is a Phosphoserine. 2 disordered regions span residues 1521–1590 (EETQ…NRSS) and 1644–1737 (PEPT…PITF). Composition is skewed to basic and acidic residues over residues 1551–1560 (ESRKAEDEMQ), 1573–1589 (NKNK…ENRS), and 1658–1670 (RLSE…KKSE). Over residues 1685 to 1709 (THVSNQKSNSISQRHQNEFKNVSES) the composition is skewed to polar residues. 4 positions are modified to phosphoserine: Ser-1753, Ser-1768, Ser-1821, and Ser-1851. Positions 1921–1989 (FLKDDLRNPP…LDENDKESEL (69 aa)) are disordered. Residues 1933 to 1943 (SESLSSNSPSS) show a composition bias toward low complexity. The segment covering 1959-1989 (YEDDPVDSDCDTDTTTDDEYYLDENDKESEL) has biased composition (acidic residues).

In terms of assembly, interacts with RAB27A. Expressed in keratinocytes.

May act as Rab effector protein and play a role in vesicle trafficking. The protein is Exophilin-5 of Homo sapiens (Human).